Here is a 1020-residue protein sequence, read N- to C-terminus: MAREHGSMRALVNSLAGLLGETDTEVPSLEPAMLMVLKSSISEFFLSTDTVSVDEAAELFPRLQFLACRAYAASHTPDAAMLAENLAGLVLWRIHQNWTDREMEAVDQMFVLLEIMNGESGVYMLSNNNLRISAKYGPSNMHLIVSTWLDTFRNVMSVAAKSTPDSLFNSKRMESIEEFSKPLVHAKFNLIYDMPFVQEGLRIVAKKINWILPFGLMVKGYKDMSMAPLTRALFLLSLVDSYFPKGTATEGSMKALTAYFRELVRTIDNSAFVPITEVNATPRTAYEVRVSSAIVHQNPYVTDTKAGMVAERVRTDAEILTSGALLSSGALSAHATAVAKLLSSNEPDDVSSRARARVAEHASNTWETIQASTTPTQVVEALVTAGFTSTHCGILERVVVDYFTRLRSTANSGPGRNDSLDYAQQVVGCVAIVGGVVFRLLLSYGFGLDYIRDYTTTISTLEPVYNELLSALGLADKGVEQTLKRSMAPRPYMNYISAARAALDDELLIVEKRTTGPGTHSAARESLLTWFDFRARDRWGVRIPDRDTTSTQVLAPITASLYSDDDLIAAASKLSFDALDAPPTQIIDDPSFAPYMLATVVLDAFNAILTSRFSADSVSQALRVLSWARDYGAGSIANVDGYRTKLTAIIASVSPFLQKDAPTPTMAHANNLEALLGELHSVVVAAIALIPERARMPVPERPSVKTSTFLAGLFLTAVYKRLETLVGHTAELTNNILGTASGIVSSIVTLNRFFNCRIMPVMGHYAVLIYPQSAQSAPFGRWRLVDVVDAVGSIYNEVSDLRADLRADVVTLKGDITSAAEALQECEALAVKTEGTRFGKLFNSLLTRHTQLARAQRGLAIRAGKLLGGSEAPGLKHVNTFLQRWGAISVMYQKATSGSTPEVNITSLANTLRHVWDEVQQERKATPPSRKFSNRDLGLAVERLMGGYPEVLDDDSNSTALTPKFNVDSWNSVNMDALRKRVTMPANIDSIRGNDSLATREYLKKEDLLAEIDAIFNNTK.

The tract at residues 539–1020 is interaction with large tegument protein; the sequence is WGVRIPDRDT…EIDAIFNNTK (482 aa).

Belongs to the herpesviridae inner tegument protein family. Interacts (via C-terminus) with the large tegument protein/LTP (via N-terminus).

It is found in the virion tegument. Its subcellular location is the host cytoplasm. It localises to the host nucleus. The protein resides in the host Golgi apparatus. The protein localises to the host trans-Golgi network. In terms of biological role, plays an essential role in cytoplasmic secondary envelopment during viral egress. Interacts with the capsid via the large tegument protein/LTP and participates in its transport to the host trans-Golgi network (TGN) where secondary envelopment occurs. Modulates tegumentation and capsid accumulation at the viral assembly complex. This Equine herpesvirus 1 (strain Ab4p) (EHV-1) protein is Inner tegument protein.